We begin with the raw amino-acid sequence, 547 residues long: Chaperonin GroEL (547 aa).

Residues 30 to 33 (TLGP), lysine 51, 87 to 91 (DGTTT), glycine 415, and aspartate 495 contribute to the ATP site.

The protein belongs to the chaperonin (HSP60) family. In terms of assembly, forms a cylinder of 14 subunits composed of two heptameric rings stacked back-to-back. Interacts with the co-chaperonin GroES.

The protein resides in the cytoplasm. It catalyses the reaction ATP + H2O + a folded polypeptide = ADP + phosphate + an unfolded polypeptide.. Functionally, together with its co-chaperonin GroES, plays an essential role in assisting protein folding. The GroEL-GroES system forms a nano-cage that allows encapsulation of the non-native substrate proteins and provides a physical environment optimized to promote and accelerate protein folding. This is Chaperonin GroEL from Ralstonia nicotianae (strain ATCC BAA-1114 / GMI1000) (Ralstonia solanacearum).